The sequence spans 590 residues: Oleate hydratase (590 aa).

Residues Ala33, Glu56, Ser64, and Glu82 each contribute to the FAD site. Catalysis depends on Glu82, which acts as the Proton acceptor. Tyr200 functions as the Proton donor in the catalytic mechanism. The FAD site is built by Val249, Ser291, Thr508, and Ser512.

This sequence belongs to the oleate hydratase family. Monomer and homodimer. Both forms seem to be active. It depends on FAD as a cofactor.

The catalysed reaction is (R)-10-hydroxyoctadecanoate = (9Z)-octadecenoate + H2O. The enzyme catalyses (9Z)-octadecenoate + H2O = 10-hydroxyoctadecanoate. It carries out the reaction (9Z)-hexadecenoate + H2O = 10-hydroxyhexadecanoate. It catalyses the reaction (9Z,12Z)-octadecadienoate + H2O = (12Z)-10-hydroxyoctadecenoate. The catalysed reaction is (12Z)-10-hydroxyoctadecenoate + H2O = 10,13-dihydroxyoctadecanoate. The enzyme catalyses (9Z,12Z,15Z)-octadecatrienoate + H2O = (12Z,15Z)-10-hydroxyoctadecadienoate. It functions in the pathway lipid metabolism; fatty acid metabolism. In terms of biological role, catalyzes the hydration of oleate at its cis-9-double bond to yield 10-hydroxyoctadecanoate, probably in the (R) configuration, and of linoleate at its cis-9- and cis-12-double bond to yield 10-hydroxy-12-octadecenoate and 10,13-dihydroxyoctadecanoate. Is not active on trans-double bonds and esterified fatty acids as substrate; is only active on cis-9- and/or cis-12-double bond of C16 and C18 fatty acids without any trans-configurations, producing 10-hydroxy and 10,13-dihydroxy derivatives. Appears to play a role in oleic acid detoxification and bacterial virulence. In Streptococcus pyogenes serotype M49 (strain NZ131), this protein is Oleate hydratase (sph).